The chain runs to 111 residues: Transcription and mRNA export factor SUS1 (111 aa).

This sequence belongs to the ENY2 family. As to quaternary structure, component of the nuclear pore complex (NPC)-associated TREX-2 complex (transcription and export complex 2), composed of at least SUS1, SAC3, THP1, SEM1, and CDC31. TREX-2 contains 2 SUS1 chains. The TREX-2 complex interacts with the nucleoporin NUP1. Component of the 1.8 MDa SAGA transcription coactivator-HAT complex. SAGA is built of 5 distinct domains with specialized functions. Within the SAGA complex, SUS1, SGF11, SGF73 and UBP8 form an additional subcomplex of SAGA called the DUB module (deubiquitination module). Interacts directly with THP1, SAC3, SGF11, and with the RNA polymerase II.

It localises to the nucleus. The protein localises to the nucleoplasm. Its subcellular location is the cytoplasm. It is found in the P-body. Involved in mRNA export coupled transcription activation by association with both the TREX-2 and the SAGA complexes. At the promoters, SAGA is required for recruitment of the basal transcription machinery. It influences RNA polymerase II transcriptional activity through different activities such as TBP interaction and promoter selectivity, interaction with transcription activators, and chromatin modification through histone acetylation and deubiquitination. Within the SAGA complex, participates in a subcomplex required for deubiquitination of H2B and for the maintenance of steady-state H3 methylation levels. The TREX-2 complex functions in docking export-competent ribonucleoprotein particles (mRNPs) to the nuclear entrance of the nuclear pore complex (nuclear basket). TREX-2 participates in mRNA export and accurate chromatin positioning in the nucleus by tethering genes to the nuclear periphery. May also be involved in cytoplasmic mRNA decay by interaction with components of P-bodies. The chain is Transcription and mRNA export factor SUS1 from Lodderomyces elongisporus (strain ATCC 11503 / CBS 2605 / JCM 1781 / NBRC 1676 / NRRL YB-4239) (Yeast).